A 117-amino-acid chain; its full sequence is Large ribosomal subunit protein bL20 (117 aa).

Belongs to the bacterial ribosomal protein bL20 family.

In terms of biological role, binds directly to 23S ribosomal RNA and is necessary for the in vitro assembly process of the 50S ribosomal subunit. It is not involved in the protein synthesizing functions of that subunit. This chain is Large ribosomal subunit protein bL20, found in Vibrio metschnikovii.